The sequence spans 72 residues: Translation initiation factor IF-1 (72 aa).

The S1-like domain maps to Met1 to Lys72.

The protein belongs to the IF-1 family. As to quaternary structure, component of the 30S ribosomal translation pre-initiation complex which assembles on the 30S ribosome in the order IF-2 and IF-3, IF-1 and N-formylmethionyl-tRNA(fMet); mRNA recruitment can occur at any time during PIC assembly.

Its subcellular location is the cytoplasm. Functionally, one of the essential components for the initiation of protein synthesis. Stabilizes the binding of IF-2 and IF-3 on the 30S subunit to which N-formylmethionyl-tRNA(fMet) subsequently binds. Helps modulate mRNA selection, yielding the 30S pre-initiation complex (PIC). Upon addition of the 50S ribosomal subunit IF-1, IF-2 and IF-3 are released leaving the mature 70S translation initiation complex. The polypeptide is Translation initiation factor IF-1 (Cereibacter sphaeroides (strain ATCC 17029 / ATH 2.4.9) (Rhodobacter sphaeroides)).